The sequence spans 116 residues: Phosphoribosyl-ATP pyrophosphatase (116 aa).

This sequence belongs to the PRA-PH family.

It is found in the cytoplasm. The catalysed reaction is 1-(5-phospho-beta-D-ribosyl)-ATP + H2O = 1-(5-phospho-beta-D-ribosyl)-5'-AMP + diphosphate + H(+). Its pathway is amino-acid biosynthesis; L-histidine biosynthesis; L-histidine from 5-phospho-alpha-D-ribose 1-diphosphate: step 2/9. The sequence is that of Phosphoribosyl-ATP pyrophosphatase from Bordetella avium (strain 197N).